The following is a 368-amino-acid chain: Homoserine O-acetyltransferase (368 aa).

Residues 47 to 349 (NAILICHALS…SGEGHDSFLL (303 aa)) form the AB hydrolase-1 domain. Ser153 serves as the catalytic Nucleophile. Arg221 is a substrate binding site. Residues Asp311 and His344 contribute to the active site. Asp345 is a substrate binding site.

This sequence belongs to the AB hydrolase superfamily. MetX family. As to quaternary structure, homodimer.

Its subcellular location is the cytoplasm. It carries out the reaction L-homoserine + acetyl-CoA = O-acetyl-L-homoserine + CoA. It participates in amino-acid biosynthesis; L-methionine biosynthesis via de novo pathway; O-acetyl-L-homoserine from L-homoserine: step 1/1. In terms of biological role, transfers an acetyl group from acetyl-CoA to L-homoserine, forming acetyl-L-homoserine. The protein is Homoserine O-acetyltransferase of Leptospira borgpetersenii serovar Hardjo-bovis (strain JB197).